The chain runs to 785 residues: 5-methyltetrahydropteroyltriglutamate--homocysteine methyltransferase (785 aa).

5-methyltetrahydropteroyltri-L-glutamate contacts are provided by residues 15–18 (RELK) and Lys-121. L-homocysteine contacts are provided by residues 460–462 (IGS) and Glu-513. Residues 460–462 (IGS) and Glu-513 each bind L-methionine. Residues 544-545 (RC) and Trp-590 each bind 5-methyltetrahydropteroyltri-L-glutamate. Asp-628 serves as a coordination point for L-homocysteine. Asp-628 lines the L-methionine pocket. Glu-634 is a binding site for 5-methyltetrahydropteroyltri-L-glutamate. The Zn(2+) site is built by His-670, Cys-672, and Glu-694. The active-site Proton donor is the His-723. Cys-755 serves as a coordination point for Zn(2+).

It belongs to the vitamin-B12 independent methionine synthase family. Zn(2+) serves as cofactor.

The enzyme catalyses 5-methyltetrahydropteroyltri-L-glutamate + L-homocysteine = tetrahydropteroyltri-L-glutamate + L-methionine. The protein operates within amino-acid biosynthesis; L-methionine biosynthesis via de novo pathway; L-methionine from L-homocysteine (MetE route): step 1/1. Its function is as follows. Catalyzes the transfer of a methyl group from 5-methyltetrahydrofolate to homocysteine resulting in methionine formation. This is 5-methyltetrahydropteroyltriglutamate--homocysteine methyltransferase from Nitratidesulfovibrio vulgaris (strain ATCC 29579 / DSM 644 / CCUG 34227 / NCIMB 8303 / VKM B-1760 / Hildenborough) (Desulfovibrio vulgaris).